A 306-amino-acid chain; its full sequence is UDP-N-acetylenolpyruvoylglucosamine reductase (306 aa).

In terms of domain architecture, FAD-binding PCMH-type spans 34–199; that stretch reads RVGGPAQLLF…TSVRLRGAIA (166 aa). The active site involves Arg-179. Ser-228 serves as the catalytic Proton donor. Glu-298 is a catalytic residue.

It belongs to the MurB family. Requires FAD as cofactor.

It is found in the cytoplasm. The catalysed reaction is UDP-N-acetyl-alpha-D-muramate + NADP(+) = UDP-N-acetyl-3-O-(1-carboxyvinyl)-alpha-D-glucosamine + NADPH + H(+). It functions in the pathway cell wall biogenesis; peptidoglycan biosynthesis. In terms of biological role, cell wall formation. The chain is UDP-N-acetylenolpyruvoylglucosamine reductase from Rhodopseudomonas palustris (strain BisA53).